The primary structure comprises 444 residues: Acyl-CoA 6-desaturase (444 aa).

A disordered region spans residues 1–21 (MGKGGNQGEGSTERQAPMPTF). The Cytoplasmic portion of the chain corresponds to 1 to 130 (MGKGGNQGEG…EDMNLFKTNH (130 aa)). A Cytochrome b5 heme-binding domain is found at 18-95 (MPTFRWEEIQ…LKPLLIGELA (78 aa)). Residues 131-151 (LFFFLLLSHIIVMESLAWFIL) traverse the membrane as a helical segment. S152 is a topological domain (lumenal). The helical transmembrane segment at 153–173 (YFGTGWIPTLVTAFVLATSQA) threads the bilayer. At 174 to 264 (QAGWLQHDYG…KYLPYNHQHE (91 aa)) the chain is on the cytoplasmic side. Positions 180–184 (HDYGH) match the Histidine box-1 motif. The Histidine box-2 signature appears at 217-221 (HFQHH). The helical transmembrane segment at 265–285 (YFFLIGPPLLIPMYFQYQIIM) threads the bilayer. Over 286–305 (TMISRRDWVDLAWAISYYMR) the chain is Lumenal. The helical transmembrane segment at 306 to 326 (FFYTYIPFYGILGALVFLNFI) threads the bilayer. Topologically, residues 327–444 (RFLESHWFVW…ELWLDAYLHK (118 aa)) are cytoplasmic. The Histidine box-3 signature appears at 382 to 386 (QIEHH).

The protein belongs to the fatty acid desaturase type 1 family. Highly expressed in the adrenal gland, liver, brain, and testis, tissues where lipogenesis and steroidogenesis are active. Also detected in lung, heart, and skeletal muscle.

It is found in the endoplasmic reticulum membrane. It carries out the reaction (9Z,12Z)-octadecadienoyl-CoA + 2 Fe(II)-[cytochrome b5] + O2 + 2 H(+) = (6Z,9Z,12Z)-octadecatrienoyl-CoA + 2 Fe(III)-[cytochrome b5] + 2 H2O. It catalyses the reaction (9Z,12Z,15Z)-octadecatrienoyl-CoA + 2 Fe(II)-[cytochrome b5] + O2 + 2 H(+) = (6Z,9Z,12Z,15Z)-octadecatetraenoyl-CoA + 2 Fe(III)-[cytochrome b5] + 2 H2O. The enzyme catalyses (9Z,12Z,15Z,18Z,21Z)-tetracosapentaenoyl-CoA + 2 Fe(II)-[cytochrome b5] + O2 + 2 H(+) = (6Z,9Z,12Z,15Z,18Z,21Z)-tetracosahexaenoyl-CoA + 2 Fe(III)-[cytochrome b5] + 2 H2O. The catalysed reaction is (11E)-octadecenoyl-CoA + 2 Fe(II)-[cytochrome b5] + O2 + 2 H(+) = (6Z,11E)-octadecadienoyl-CoA + 2 Fe(III)-[cytochrome b5] + 2 H2O. It carries out the reaction (11Z,14Z)-eicosadienoyl-CoA + 2 Fe(II)-[cytochrome b5] + O2 + 2 H(+) = (8Z,11Z,14Z)-eicosatrienoyl-CoA + 2 Fe(III)-[cytochrome b5] + 2 H2O. It catalyses the reaction (11Z,14Z,17Z)-eicosatrienoyl-CoA + 2 Fe(II)-[cytochrome b5] + O2 + 2 H(+) = (8Z,11Z,14Z,17Z)-eicosatetraenoyl-CoA + 2 Fe(III)-[cytochrome b5] + 2 H2O. It participates in lipid metabolism; polyunsaturated fatty acid biosynthesis. In terms of biological role, involved in the biosynthesis of highly unsaturated fatty acids (HUFA) from the essential polyunsaturated fatty acids (PUFA) linoleic acid (LA) (18:2n-6) and alpha-linolenic acid (ALA) (18:3n-3) precursors, acting as a fatty acyl-coenzyme A (CoA) desaturase that introduces a cis double bond at carbon 6 of the fatty acyl chain. Catalyzes the first and rate limiting step in this pathway which is the desaturation of LA (18:2n-6) and ALA (18:3n-3) into gamma-linoleate (GLA) (18:3n-6) and stearidonate (18:4n-3), respectively. Subsequently, in the biosynthetic pathway of HUFA n-3 series, it desaturates tetracosapentaenoate (24:5n-3) to tetracosahexaenoate (24:6n-3), which is then converted to docosahexaenoate (DHA)(22:6n-3), an important lipid for nervous system function. It can also desaturate (11E)-octadecenoate (trans-vaccenoate) at carbon 6 generating (6Z,11E)-octadecadienoate. In addition to Delta-6 activity, this enzyme exhibits Delta-8 activity with slight biases toward n-3 fatty acyl-CoA substrates. This chain is Acyl-CoA 6-desaturase, found in Mus musculus (Mouse).